Here is a 189-residue protein sequence, read N- to C-terminus: MFDSIVYFFNKSGFVTTLVLVWISLYLVMTLWVFLYKSIVLKIELRREMQSLSNILNGAQDAPEHFMFNKKRNDETKRYSNELLQAWKHQVLKQSTTGLVVLSIISSTAPFIGLFGTVVEILEAFNNLGALGQASFGVIAPIISKALIATAAGILAAIPAYSFYLILKRKVYDLSVYVQMQVDILSSKK.

Transmembrane regions (helical) follow at residues 14–34 (FVTTLVLVWISLYLVMTLWVF), 99–119 (LVVLSIISSTAPFIGLFGTVV), and 147–167 (LIATAAGILAAIPAYSFYLIL).

It belongs to the ExbB/TolQ family.

The protein resides in the cell inner membrane. This chain is Putative biopolymer transport protein ExbB-like 1, found in Helicobacter pylori (strain J99 / ATCC 700824) (Campylobacter pylori J99).